We begin with the raw amino-acid sequence, 180 residues long: Small ribosomal subunit protein bS21c (180 aa).

The N-terminal 79 residues, 1 to 79 (MASTSSLLNF…PSLAFSNTLY (79 aa)), are a transit peptide targeting the chloroplast. Residues 14 to 45 (LFPSNTSLPPSSNPKFPNPNSLSSQQNSISIS) show a composition bias toward low complexity. Disordered stretches follow at residues 14 to 49 (LFPS…SKKH) and 124 to 180 (NKQE…GAPF). A compositionally biased stretch (basic residues) spans 130–147 (KRKHREAAKRNSRRRRGP). Over residues 154 to 166 (GKEEATKVDKKED) the composition is skewed to basic and acidic residues.

In terms of assembly, component of the chloroplast small ribosomal subunit (SSU). Mature 70S chloroplast ribosomes of higher plants consist of a small (30S) and a large (50S) subunit. The 30S small subunit contains 1 molecule of ribosomal RNA (16S rRNA) and 24 different proteins. The 50S large subunit contains 3 rRNA molecules (23S, 5S and 4.5S rRNA) and 33 different proteins. bS21c binds directly to 16S ribosomal RNA.

It localises to the plastid. The protein resides in the chloroplast. In terms of biological role, component of the chloroplast ribosome (chloro-ribosome), a dedicated translation machinery responsible for the synthesis of chloroplast genome-encoded proteins, including proteins of the transcription and translation machinery and components of the photosynthetic apparatus. The chain is Small ribosomal subunit protein bS21c (rps21) from Spinacia oleracea (Spinach).